The primary structure comprises 194 residues: dTTP/UTP pyrophosphatase (194 aa).

Asp73 (proton acceptor) is an active-site residue.

Belongs to the Maf family. YhdE subfamily. A divalent metal cation serves as cofactor.

The protein localises to the cytoplasm. The enzyme catalyses dTTP + H2O = dTMP + diphosphate + H(+). It catalyses the reaction UTP + H2O = UMP + diphosphate + H(+). In terms of biological role, nucleoside triphosphate pyrophosphatase that hydrolyzes dTTP and UTP. May have a dual role in cell division arrest and in preventing the incorporation of modified nucleotides into cellular nucleic acids. This Clostridium botulinum (strain Kyoto / Type A2) protein is dTTP/UTP pyrophosphatase.